Consider the following 304-residue polypeptide: Hairy/enhancer-of-split related with YRPW motif protein 1 (304 aa).

Positions 1–52 (MKRAHPEYSSSESELDETIEVEKESADENGNLSSALGSMSPTTSSQILARKR) are disordered. Residues 28 to 47 (ENGNLSSALGSMSPTTSSQI) are compositionally biased toward polar residues. The segment at 48–117 (LARKRRRGII…GGKGYFDAHA (70 aa)) is transcriptional repression and interaction with NCOR1 and SIN3A. In terms of domain architecture, bHLH spans 49 to 104 (ARKRRRGIIEKRRRDRINNSLSELRRLVPSAFEKQGSAKLEKAEILQMTVDHLKML). The 37-residue stretch at 122–158 (YRSLGFRECLAEVARYLSIIEGLDASDPLRVRLVSHL) folds into the Orange domain. The span at 197-211 (SQSTHGNTGTSASPT) shows a compositional bias: polar residues. Residues 197–234 (SQSTHGNTGTSASPTESHHQGRLATAHPEASALRAPPS) form a disordered region. A YRPW motif motif is present at residues 294–297 (YRPW).

Belongs to the HEY family. In terms of assembly, self-associates. Interacts with HES1 and HEYL. Interacts with HDAC1, NCOR1 and SIN3A. Interacts with GATA4 and GATA6. Interacts with CCDC89/BOIP.

It localises to the nucleus. In terms of biological role, transcriptional repressor which binds preferentially to the canonical E box sequence 5'-CACGTG-3'. Downstream effector of Notch signaling required for cardiovascular development. Specifically required for the Notch-induced endocardial epithelial to mesenchymal transition, which is itself criticial for cardiac valve and septum development. May be required in conjunction with HEY2 to specify arterial cell fate or identity. Promotes maintenance of neuronal precursor cells and glial versus neuronal fate specification. Represses transcription by the cardiac transcriptional activators GATA4 and GATA6 and by the neuronal bHLH factors ASCL1/MASH1 and NEUROD4/MATH3. This chain is Hairy/enhancer-of-split related with YRPW motif protein 1 (HEY1), found in Bos taurus (Bovine).